A 551-amino-acid polypeptide reads, in one-letter code: Putative transport protein CGSHiEE_03135 (551 aa).

5 helical membrane-spanning segments follow: residues 4–24, 28–48, 65–85, 95–115, and 157–177; these read IAIT…IGHW, GVGL…HFTD, FGLI…FFSS, AFAI…HKIA, and VSYA…MWLI. 2 RCK C-terminal domains span residues 191–275 and 277–360; these read RFNA…IIGY and VDAP…VIGN. 6 consecutive transmembrane segments (helical) span residues 370 to 390, 402 to 424, 438 to 458, 463 to 483, 492 to 512, and 529 to 549; these read MLPV…PFYI, AGGP…LYWF, IVLF…DTLV, LEWM…AGTI, YLTI…LAFA, and VYPL…VLLW.

Belongs to the AAE transporter (TC 2.A.81) family. YidE subfamily.

It localises to the cell membrane. The protein is Putative transport protein CGSHiEE_03135 of Haemophilus influenzae (strain PittEE).